Consider the following 274-residue polypeptide: 4-deoxy-L-threo-5-hexosulose-uronate ketol-isomerase (274 aa).

Residues His-192, His-194, Glu-199, and His-241 each contribute to the Zn(2+) site.

This sequence belongs to the KduI family. Requires Zn(2+) as cofactor.

The catalysed reaction is 5-dehydro-4-deoxy-D-glucuronate = 3-deoxy-D-glycero-2,5-hexodiulosonate. It functions in the pathway glycan metabolism; pectin degradation; 2-dehydro-3-deoxy-D-gluconate from pectin: step 4/5. Functionally, catalyzes the isomerization of 5-dehydro-4-deoxy-D-glucuronate to 3-deoxy-D-glycero-2,5-hexodiulosonate. The protein is 4-deoxy-L-threo-5-hexosulose-uronate ketol-isomerase of Cereibacter sphaeroides (strain ATCC 17025 / ATH 2.4.3) (Rhodobacter sphaeroides).